We begin with the raw amino-acid sequence, 284 residues long: Short chain dehydrogenase/reductase AacuD (284 aa).

Residue Val37 participates in NADP(+) binding. Residues Ser166 and Tyr180 each act as proton donor in the active site. Positions 180, 184, and 215 each coordinate NADP(+). Catalysis depends on Lys184, which acts as the Lowers pKa of active site Tyr.

Belongs to the short-chain dehydrogenases/reductases (SDR) family.

Its pathway is secondary metabolite biosynthesis. Short chain dehydrogenase/reductase; part of the gene cluster that mediates the biosynthesis of the tetrahydroxanthone dimer secalonic acid D. The pathway begins with the synthesis of atrochrysone thioester by the polyketide synthase AacuL. The atrochrysone carboxyl ACP thioesterase AacuM then breaks the thioester bond and releases the atrochrysone carboxylic acid from AacuL. Atrochrysone carboxylic acid is decarboxylated by the decarboxylase AacuI, and oxidized by the anthrone oxygenase AacuG to yield emodin. Emodin is then reduced to emodin hydroquinone by a yet unidentified oxidoreductase. A-ring reduction by the short chain dehydrogenase AacuN, dehydration by the scytalone dehydratase-like protein AacuK and probable spontaneous re-oxidation, results in overall deoxygenation to chrysophanol. Baeyer-Villiger oxidation by the Baeyer-Villiger monooxygenase (BVMO) AacuH then yields monodictyphenone. Monodictyphenone is transformed into compounds with the tetrahydroxanthone skeleton via methylesterification by the methyltransferase AacuQ, followed by the action of the flavin-dependent monooxygenase AacuC, the isomerase AacuP, and the short chain dehydrogenase/reductase AacuF or AacuD. AacuF and AacuD should accept the same compound as a substrate but perform the ketoreduction with a different stereoselectivity, thus yielding blennolides B and A, respectively. In the final step of the biosynthesis, the cytochrome P450 monooxygenase AacuE accepts blennolide B and/or blennolide A to conduct the dimerization reaction to furnish the tetrahydroxanthone dimers, secalonic acids D, B, and F. The protein is Short chain dehydrogenase/reductase AacuD of Aspergillus aculeatus (strain ATCC 16872 / CBS 172.66 / WB 5094).